Here is a 213-residue protein sequence, read N- to C-terminus: Phosphoribosyl-dephospho-CoA transferase (213 aa).

Catalysis depends on residues Asp-135 and Asp-137.

The protein belongs to the MdcG family.

The enzyme catalyses apo-[malonate decarboxylase ACP] + 2'-(5''-triphospho-alpha-D-ribosyl)-3'-dephospho-CoA = holo-[malonate decarboxylase ACP] + diphosphate. Functionally, transfers 2'-(5-triphosphoribosyl)-3'-dephosphocoenzyme-A to the apo-[acyl-carrier-protein] of the malonate decarboxylase to yield holo-[acyl-carrier-protein]. In Xanthomonas campestris pv. campestris (strain ATCC 33913 / DSM 3586 / NCPPB 528 / LMG 568 / P 25), this protein is Phosphoribosyl-dephospho-CoA transferase.